The chain runs to 237 residues: Protein GrpE (237 aa).

The segment at 1 to 65 (MTDSYKLPDN…DAREDDRDPT (65 aa)) is disordered. Positions 55-65 (VDAREDDRDPT) are enriched in basic and acidic residues.

It belongs to the GrpE family. In terms of assembly, homodimer.

The protein resides in the cytoplasm. Functionally, participates actively in the response to hyperosmotic and heat shock by preventing the aggregation of stress-denatured proteins, in association with DnaK and GrpE. It is the nucleotide exchange factor for DnaK and may function as a thermosensor. Unfolded proteins bind initially to DnaJ; upon interaction with the DnaJ-bound protein, DnaK hydrolyzes its bound ATP, resulting in the formation of a stable complex. GrpE releases ADP from DnaK; ATP binding to DnaK triggers the release of the substrate protein, thus completing the reaction cycle. Several rounds of ATP-dependent interactions between DnaJ, DnaK and GrpE are required for fully efficient folding. The sequence is that of Protein GrpE from Corynebacterium efficiens (strain DSM 44549 / YS-314 / AJ 12310 / JCM 11189 / NBRC 100395).